The chain runs to 585 residues: Arginine--tRNA ligase (585 aa).

The 'HIGH' region motif lies at 131–141; the sequence is ANPTGPMHVGH.

It belongs to the class-I aminoacyl-tRNA synthetase family. Monomer.

The protein resides in the cytoplasm. The enzyme catalyses tRNA(Arg) + L-arginine + ATP = L-arginyl-tRNA(Arg) + AMP + diphosphate. The protein is Arginine--tRNA ligase of Sinorhizobium medicae (strain WSM419) (Ensifer medicae).